A 183-amino-acid chain; its full sequence is Bifunctional protein PyrR (183 aa).

A PRPP-binding motif is present at residues 100-112; sequence VILVDDVLYTGRT.

Belongs to the purine/pyrimidine phosphoribosyltransferase family. PyrR subfamily.

It catalyses the reaction UMP + diphosphate = 5-phospho-alpha-D-ribose 1-diphosphate + uracil. In terms of biological role, regulates the transcription of the pyrimidine nucleotide (pyr) operon in response to exogenous pyrimidines. Functionally, also displays a weak uracil phosphoribosyltransferase activity which is not physiologically significant. The sequence is that of Bifunctional protein PyrR from Deinococcus deserti (strain DSM 17065 / CIP 109153 / LMG 22923 / VCD115).